We begin with the raw amino-acid sequence, 429 residues long: UDP-N-acetylglucosamine 1-carboxyvinyltransferase (429 aa).

Phosphoenolpyruvate is bound at residue 22 to 23 (KN). Residue R102 participates in UDP-N-acetyl-alpha-D-glucosamine binding. C126 functions as the Proton donor in the catalytic mechanism. C126 carries the post-translational modification 2-(S-cysteinyl)pyruvic acid O-phosphothioketal. UDP-N-acetyl-alpha-D-glucosamine-binding positions include 131 to 135 (RPVDL), D316, and I338.

It belongs to the EPSP synthase family. MurA subfamily.

It localises to the cytoplasm. It carries out the reaction phosphoenolpyruvate + UDP-N-acetyl-alpha-D-glucosamine = UDP-N-acetyl-3-O-(1-carboxyvinyl)-alpha-D-glucosamine + phosphate. The protein operates within cell wall biogenesis; peptidoglycan biosynthesis. Cell wall formation. Adds enolpyruvyl to UDP-N-acetylglucosamine. This Methylorubrum extorquens (strain CM4 / NCIMB 13688) (Methylobacterium extorquens) protein is UDP-N-acetylglucosamine 1-carboxyvinyltransferase.